We begin with the raw amino-acid sequence, 207 residues long: Outer-membrane lipoprotein LolB (207 aa).

The first 21 residues, 1–21, serve as a signal peptide directing secretion; that stretch reads MPMRKRHFYRLLPLASLLLAA. C22 is lipidated: N-palmitoyl cysteine. C22 carries S-diacylglycerol cysteine lipidation.

This sequence belongs to the LolB family. As to quaternary structure, monomer.

The protein localises to the cell outer membrane. Plays a critical role in the incorporation of lipoproteins in the outer membrane after they are released by the LolA protein. The chain is Outer-membrane lipoprotein LolB from Yersinia pestis bv. Antiqua (strain Antiqua).